We begin with the raw amino-acid sequence, 478 residues long: Noelin-3 (478 aa).

The signal sequence occupies residues 1-23; sequence MSAPLLKLGAVLSTMAMISNWMS. N-linked (GlcNAc...) asparagine glycans are attached at residues Asn-33, Asn-95, Asn-179, Asn-299, and Asn-465. Residues 77 to 217 adopt a coiled-coil conformation; the sequence is CSRDAKSRQL…TRLRDCMKKL (141 aa). An Olfactomedin-like domain is found at 218-470; it reads TCGKLMKITG…QVLFNVTLFH (253 aa). A disulfide bond links Cys-219 and Cys-401.

As to quaternary structure, peripherally associated with AMPAR complex. AMPAR complex consists of an inner core made of 4 pore-forming GluA/GRIA proteins (GRIA1, GRIA2, GRIA3 and GRIA4) and 4 major auxiliary subunits arranged in a twofold symmetry. One of the two pairs of distinct binding sites is occupied either by CNIH2, CNIH3 or CACNG2, CACNG3. The other harbors CACNG2, CACNG3, CACNG4, CACNG8 or GSG1L. This inner core of AMPAR complex is complemented by outer core constituents binding directly to the GluA/GRIA proteins at sites distinct from the interaction sites of the inner core constituents. Outer core constituents include at least PRRT1, PRRT2, CKAMP44/SHISA9, FRRS1L and NRN1. The proteins of the inner and outer core serve as a platform for other, more peripherally associated AMPAR constituents, including OLFM3. Alone or in combination, these auxiliary subunits control the gating and pharmacology of the AMPAR complex and profoundly impact their biogenesis and protein processing. Homodimer. Interacts with MYOC. Interacts with OLFM2. In terms of tissue distribution, expressed in the brain (at protein level). Also expressed in the retina, mainly in the ganglion cell layer and in the amacrine cell subregion of the inner nuclear layer. Expressed at high levels in the epithelial cells of the posterior iris and the ciliary body and, at lower levels, in the trabecular meshwork. Isoform 2 preferentially expressed in retina and brain, while isoform 1 preferentially expressed in the tissues of the eye angle.

The protein resides in the secreted. It localises to the synapse. The sequence is that of Noelin-3 (Olfm3) from Rattus norvegicus (Rat).